Reading from the N-terminus, the 277-residue chain is Large ribosomal subunit protein uL2c (277 aa).

The disordered stretch occupies residues 223–277 (VVMNPIDHPHGGGEGRAPIGRKKPLTPWGHPALGKRSRKNNKYSDTLILRRRKNS).

The protein belongs to the universal ribosomal protein uL2 family. Part of the 50S ribosomal subunit.

It localises to the plastid. Its subcellular location is the chloroplast. This chain is Large ribosomal subunit protein uL2c (rpl2), found in Marchantia polymorpha (Common liverwort).